Reading from the N-terminus, the 402-residue chain is Multidrug resistance protein MdtH (402 aa).

At 1–12 (MSRVSQARNLGK) the chain is on the cytoplasmic side. Residues 13 to 33 (YFLLIDNMLVVLGFFVVFPLI) traverse the membrane as a helical segment. The Periplasmic segment spans residues 34–98 (SIRFVDQMGW…GFATMGIAHE (65 aa)). A helical transmembrane segment spans residues 99 to 116 (PWLLWFSCLLSGLGGTLF). At 117–138 (DPPRSALVVKLIRPQQRGRFFS) the chain is on the cytoplasmic side. A helical membrane pass occupies residues 139–159 (LLMMQDSASAVIGALLGSWLL). At 160 to 164 (QYDFR) the chain is on the periplasmic side. The helical transmembrane segment at 165–185 (LVCATGAVLFVLCAAFNAWLL) threads the bilayer. Topologically, residues 186–213 (PAWKLSTVRTPVREGMTRVMRDKRFVTY) are cytoplasmic. A helical membrane pass occupies residues 214 to 234 (VLTLAGYYMLAVQVMLMLPIM). Over 235-243 (VNDVAGAPS) the chain is Periplasmic. A helical membrane pass occupies residues 244-264 (AVKWMYAIEACLSLTLLYPIA). Residues 265–276 (RWSEKHFRLEHR) are Cytoplasmic-facing. The helical transmembrane segment at 277–297 (LMAGLLIMSLSMMPVGMVSGL) threads the bilayer. Residues 298-299 (QQ) lie on the Periplasmic side of the membrane. The helical transmembrane segment at 300 to 320 (LFTLICLFYIGSIIAEPARET) threads the bilayer. The Cytoplasmic segment spans residues 321 to 339 (LSASLADARARGSYMGFSR). A helical membrane pass occupies residues 340–360 (LGLAIGGAIGYIGGGWLFDLG). Topologically, residues 361 to 367 (KSAHQPE) are periplasmic. Residues 368–388 (LPWMMLGIIGIFTFLALGWQF) traverse the membrane as a helical segment. The Cytoplasmic portion of the chain corresponds to 389 to 402 (SQKRAARRLLERDA).

This sequence belongs to the major facilitator superfamily. DHA1 family. MdtH (TC 2.A.1.2.21) subfamily.

The protein localises to the cell inner membrane. This Shigella flexneri protein is Multidrug resistance protein MdtH.